An 88-amino-acid polypeptide reads, in one-letter code: KTx type I (88 aa).

The first 19 residues, 1 to 19, serve as a signal peptide directing secretion; that stretch reads MKTTLVVVVLACIVALTSA. Residues 54–88 enclose the ShKT domain; it reads CKDVLSEFSCGVLKKDGQCNKADIQAKCKLTCDKC. 3 disulfides stabilise this stretch: C54/C88, C63/C81, and C72/C85.

Belongs to the sea anemone type 1 potassium channel toxin family. As to expression, expressed both outside and in acontia, a specialised envenomation structure laden with batteries of venom-containing nematocysts found only in the superfamily Metridioidea.

Its subcellular location is the secreted. It localises to the nematocyst. Inhibits voltage-gated potassium channels (Kv1/KCNA). This Calliactis polypus (Hermit crab anemone) protein is KTx type I.